We begin with the raw amino-acid sequence, 262 residues long: 14-3-3-like protein A (262 aa).

The tract at residues 240-262 is disordered; it reads DNAEEGGDEIKEAASKPEGEGHS. A compositionally biased stretch (basic and acidic residues) spans 247–262; the sequence is DEIKEAASKPEGEGHS.

This sequence belongs to the 14-3-3 family.

The protein is 14-3-3-like protein A of Hordeum vulgare (Barley).